The chain runs to 174 residues: Ly6/PLAUR domain-containing protein 6 (174 aa).

The signal sequence occupies residues 1–22; the sequence is MEPWPLMAWGLMLTAITGWIKA. Positions 47 to 141 constitute a UPAR/Ly6 domain; it reads FKCFTCEDAP…PRNETDAIFS (95 aa). 6 disulfides stabilise this stretch: Cys-49/Cys-77, Cys-52/Cys-61, Cys-70/Cys-96, Cys-102/Cys-121, Cys-107/Cys-118, and Cys-122/Cys-127. Residues Asn-134 and Asn-147 are each glycosylated (N-linked (GlcNAc...) asparagine). Residue Ser-149 is the site of GPI-anchor amidated serine attachment. Residues 150–174 constitute a propeptide, removed in mature form; it reads AQSTQTLPLLLLSVSITSLMLHSIN.

As to quaternary structure, interacts with fzd8 and lrp6.

It localises to the cell membrane. Its subcellular location is the membrane raft. Its function is as follows. Acts as an important regulator of embryogenesis through its enhancement of Wnt/beta-catenin signaling. Positively regulates Wnt/beta-catenin signaling by ensuring phosphorylation of lrp6 specifically in plasma membrane rafts and its subsequent internalization into signaling-competent vesicles. Essential for the wnt8-mediated patterning of the mesoderm and neuroectoderm during gastrulation. In Danio rerio (Zebrafish), this protein is Ly6/PLAUR domain-containing protein 6 (lypd6).